An 84-amino-acid polypeptide reads, in one-letter code: UPF0386 protein Oant_1614 (84 aa).

Belongs to the UPF0386 family.

In Brucella anthropi (strain ATCC 49188 / DSM 6882 / CCUG 24695 / JCM 21032 / LMG 3331 / NBRC 15819 / NCTC 12168 / Alc 37) (Ochrobactrum anthropi), this protein is UPF0386 protein Oant_1614.